The sequence spans 497 residues: MENKKTKGISLFALLAIIISGAIGGGVFNLANDLARGSTPGGVVISWLFIGFGILMLVLSFNRLITIKPDLSGVSDYARAGFGDFVGFLSGWGYWISAWTGTIGFAVLMMTSADYFFPSKFANSNGSLTILSVIIVSIISWILMLLVDRGVETAAAVNAIVMIAKLIPLVVFSITGIILFKANVFTQHFWQTFTTNFAADGSVKDFVWHAMTVSGLLSQIKGSLMVMVWVFVGIEGATMMGNRAKKKSDTAKATVIGLAVLLVIYVLLSLLPYGYMDQASLANVKAPGLVYILNEMVGGWGGSLMAVGLMISLLGAWLSWTMLPVEATQQLAEQKLLPSWFGKLNKYHAPSNSLLITQLMIQIFIIITYFVANAYNVFIYMATAVIMICYALVGAYLFKIGLKEASVKNILIGFFTFAFQALALYLSGWQYVWLAMILYTIGFLLFIGAKKESHQSISVKEWLGMLVVTVLGVLAIVVLICGAKAGTAFDLRGLLGF.

Transmembrane regions (helical) follow at residues 8-28, 41-61, 88-108, 127-147, 160-180, 220-240, 255-275, 297-317, 354-374, 378-398, 406-426, 429-449, and 462-482; these read GISL…GGVF, GGVV…VLSF, FLSG…FAVL, SLTI…MLLV, IVMI…IILF, IKGS…ATMM, VIGL…PYGY, VGGW…LGAW, LLIT…VANA, FIYM…AYLF, SVKN…ALYL, WQYV…FIGA, and WLGM…LICG.

The protein belongs to the amino acid-polyamine-organocation (APC) superfamily. Basic amino acid/polyamine antiporter (APA) (TC 2.A.3.2) family.

It is found in the cell membrane. The enzyme catalyses L-ornithine(in) + L-arginine(out) = L-ornithine(out) + L-arginine(in). In terms of biological role, catalyzes electroneutral exchange between L-arginine and L-ornithine. Can also efficiently translocate L-alanine. May function in vivo as a L-arginine/L-alanine exchanger in a pathway together with the arcT gene, which is found adjacent to the arcD2 gene in the ADI gene cluster. In Lactococcus lactis subsp. cremoris (strain MG1363), this protein is Arginine/ornithine antiporter ArcD2.